A 347-amino-acid polypeptide reads, in one-letter code: Phenylalanine--tRNA ligase alpha subunit (347 aa).

Glu-261 is a Mg(2+) binding site.

This sequence belongs to the class-II aminoacyl-tRNA synthetase family. Phe-tRNA synthetase alpha subunit type 1 subfamily. Tetramer of two alpha and two beta subunits. Mg(2+) is required as a cofactor.

The protein localises to the cytoplasm. The enzyme catalyses tRNA(Phe) + L-phenylalanine + ATP = L-phenylalanyl-tRNA(Phe) + AMP + diphosphate + H(+). The chain is Phenylalanine--tRNA ligase alpha subunit from Streptococcus mutans serotype c (strain ATCC 700610 / UA159).